A 58-amino-acid chain; its full sequence is INKDCLLPMDVGRCRASHPRYYYNSSSKRCEKFIYGGCRGNANNFHTLEECEKVCGVR.

The 51-residue stretch at Cys-5–Cys-55 folds into the BPTI/Kunitz inhibitor domain. Intrachain disulfides connect Cys-5/Cys-55, Cys-14/Cys-38, and Cys-30/Cys-51.

It belongs to the venom Kunitz-type family. Sea anemone type 2 potassium channel toxin subfamily.

Its subcellular location is the secreted. The protein resides in the nematocyst. Functionally, dual-function toxin that inhibits both the serine protease trypsin (Kd&lt;30 nM) and voltage-gated potassium channels Kv1.2/KCNA2 (IC(50)=2800 nM). This is KappaPI-actitoxin-Avd3b from Anemonia sulcata (Mediterranean snakelocks sea anemone).